The following is a 173-amino-acid chain: MTGVKIVQVSEKDLPEFIAISRETFADTFGKDNSPEDMAKFLEKTINEDKLGGEIATPGSFFYFLKVDGEVAGYLKLDVDDAQNEEVDPNGLEIERIYLRKSFQHRGLGKQLFEFAEEKGREWSKSVLWLGVWEHNENAKNFYASRGLTRFSEHVFVLGDDRQTDFLLKKALV.

The 170-residue stretch at 4-173 (VKIVQVSEKD…TDFLLKKALV (170 aa)) folds into the N-acetyltransferase domain. Acetyl-CoA contacts are provided by residues 97-99 (IYL), 106-110 (RGLGK), and 136-138 (NEN).

This is an uncharacterized protein from Lactobacillus delbrueckii subsp. lactis.